Reading from the N-terminus, the 331-residue chain is PIN2/TERF1-interacting telomerase inhibitor 1 (331 aa).

3 disordered regions span residues 1–28, 156–175, and 197–331; these read MSML…DDSK, AQDG…LTTT, and SKSQ…KVSR. A G-patch domain is found at 26–72; that stretch reads DSKFGQKMLEKMGWSKGKGLGAQEQGATEHIKVKVKNNHLGLGATNN. Residue serine 233 is modified to Phosphoserine. Positions 236–246 are enriched in basic residues; sequence HKAKRHKKKKR. Basic and acidic residues predominate over residues 247–261; that stretch reads VEAERGPAAKKRDQV. Positions 254-328 are telomerase inhibitory domain (TID); that stretch reads AAKKRDQVEL…DSAPVKKKKK (75 aa). 3 positions are modified to phosphoserine: serine 269, serine 274, and serine 277. Positions 291–301 match the TBM motif; that stretch reads QDDVPKPRKRR. Positions 297-306 are enriched in basic residues; the sequence is PRKRRAKKTL.

It belongs to the PINX1 family. Interacts with MCRS1, TERT, TERF1, NCL/nucleolin, and the telomerase RNA.

It localises to the nucleus. It is found in the nucleolus. The protein resides in the chromosome. Its subcellular location is the telomere. The protein localises to the centromere. It localises to the kinetochore. In terms of biological role, microtubule-binding protein essential for faithful chromosome segregation. Mediates TRF1 and TERT accumulation in nucleolus and enhances TRF1 binding to telomeres. Inhibits telomerase activity. May inhibit cell proliferation and act as tumor suppressor. This is PIN2/TERF1-interacting telomerase inhibitor 1 from Rattus norvegicus (Rat).